A 299-amino-acid polypeptide reads, in one-letter code: Phosphoribosylaminoimidazole-succinocarboxamide synthase (299 aa).

The protein belongs to the SAICAR synthetase family.

It carries out the reaction 5-amino-1-(5-phospho-D-ribosyl)imidazole-4-carboxylate + L-aspartate + ATP = (2S)-2-[5-amino-1-(5-phospho-beta-D-ribosyl)imidazole-4-carboxamido]succinate + ADP + phosphate + 2 H(+). The protein operates within purine metabolism; IMP biosynthesis via de novo pathway; 5-amino-1-(5-phospho-D-ribosyl)imidazole-4-carboxamide from 5-amino-1-(5-phospho-D-ribosyl)imidazole-4-carboxylate: step 1/2. This is Phosphoribosylaminoimidazole-succinocarboxamide synthase from Maridesulfovibrio salexigens (strain ATCC 14822 / DSM 2638 / NCIMB 8403 / VKM B-1763) (Desulfovibrio salexigens).